Here is a 238-residue protein sequence, read N- to C-terminus: Ribonuclease PH (238 aa).

Phosphate-binding positions include Arg86 and 124–126 (GTR).

It belongs to the RNase PH family. As to quaternary structure, homodimer. Has a tendency to aggregate into multimers. It depends on Mg(2+) as a cofactor.

The enzyme catalyses tRNA(n+1) + phosphate = tRNA(n) + a ribonucleoside 5'-diphosphate. Its function is as follows. Phosphorolytic exoribonuclease that plays an important role in tRNA 3'-end maturation; has no activity on a tRNA precursor with a 3'-terminal phosphate group. In vitro is freely reversible, adds nucleotides to the ends of RNA molecules by using nucleoside diphosphates as substrates, but this may not be physiologically important. Probably plays a role in initiation of 16S rRNA degradation (leading to ribosome degradation) during starvation. The polypeptide is Ribonuclease PH (Escherichia coli (strain K12 / MC4100 / BW2952)).